Reading from the N-terminus, the 445-residue chain is Chromosome partition protein MukF (445 aa).

Positions 213–241 are leucine-zipper; it reads LSETSNTLKELQDTLQAAGDELQTQILDI.

Belongs to the MukF family. Interacts, and probably forms a ternary complex, with MukE and MukB via its C-terminal region. The complex formation is stimulated by calcium or magnesium. It is required for an interaction between MukE and MukB.

The protein resides in the cytoplasm. It localises to the nucleoid. Functionally, involved in chromosome condensation, segregation and cell cycle progression. May participate in facilitating chromosome segregation by condensation DNA from both sides of a centrally located replisome during cell division. Not required for mini-F plasmid partitioning. Probably acts via its interaction with MukB and MukE. Overexpression results in anucleate cells. It has a calcium binding activity. The polypeptide is Chromosome partition protein MukF (Vibrio vulnificus (strain YJ016)).